The sequence spans 418 residues: Serine hydroxymethyltransferase (418 aa).

Residues Leu121 and 125–127 (GHL) contribute to the (6S)-5,6,7,8-tetrahydrofolate site. N6-(pyridoxal phosphate)lysine is present on Lys230. 356 to 358 (SPF) provides a ligand contact to (6S)-5,6,7,8-tetrahydrofolate.

The protein belongs to the SHMT family. Homodimer. It depends on pyridoxal 5'-phosphate as a cofactor.

The protein localises to the cytoplasm. The enzyme catalyses (6R)-5,10-methylene-5,6,7,8-tetrahydrofolate + glycine + H2O = (6S)-5,6,7,8-tetrahydrofolate + L-serine. It participates in one-carbon metabolism; tetrahydrofolate interconversion. Its pathway is amino-acid biosynthesis; glycine biosynthesis; glycine from L-serine: step 1/1. Catalyzes the reversible interconversion of serine and glycine with tetrahydrofolate (THF) serving as the one-carbon carrier. This reaction serves as the major source of one-carbon groups required for the biosynthesis of purines, thymidylate, methionine, and other important biomolecules. Also exhibits THF-independent aldolase activity toward beta-hydroxyamino acids, producing glycine and aldehydes, via a retro-aldol mechanism. This Pseudoalteromonas atlantica (strain T6c / ATCC BAA-1087) protein is Serine hydroxymethyltransferase.